Reading from the N-terminus, the 329-residue chain is Glucokinase (329 aa).

13–18 contacts ATP; sequence GDIGGT.

Belongs to the bacterial glucokinase family.

It localises to the cytoplasm. The catalysed reaction is D-glucose + ATP = D-glucose 6-phosphate + ADP + H(+). The polypeptide is Glucokinase (Caulobacter sp. (strain K31)).